A 197-amino-acid chain; its full sequence is Imidazoleglycerol-phosphate dehydratase (197 aa).

Belongs to the imidazoleglycerol-phosphate dehydratase family.

It localises to the cytoplasm. It catalyses the reaction D-erythro-1-(imidazol-4-yl)glycerol 3-phosphate = 3-(imidazol-4-yl)-2-oxopropyl phosphate + H2O. Its pathway is amino-acid biosynthesis; L-histidine biosynthesis; L-histidine from 5-phospho-alpha-D-ribose 1-diphosphate: step 6/9. The polypeptide is Imidazoleglycerol-phosphate dehydratase (Nitrobacter hamburgensis (strain DSM 10229 / NCIMB 13809 / X14)).